We begin with the raw amino-acid sequence, 1309 residues long: Target of rapamycin complex 2 subunit ste20 (1309 aa).

The region spanning 24 to 110 (DFIKKMNTTD…IESFQGENGE (87 aa)) is the REM-1 domain. A disordered region spans residues 105–128 (QGENGEAKTGSTSLTRSASATVSR). The span at 113-128 (TGSTSLTRSASATVSR) shows a compositional bias: polar residues. Phosphoserine is present on S151. Positions 183-205 (NVNEKNNSSSEDTQPNGKRPSSL) are disordered. Residues 194–205 (DTQPNGKRPSSL) show a composition bias toward polar residues. The next 6 membrane-spanning stretches (helical) occupy residues 285–305 (LFLDATAFSCCQMLNLPWILS), 392–412 (LIDGSISENLAASAALALVYL), 504–524 (VIDLFFLIFQVEYSSWSESFL), 564–584 (TAVLLFIFLELGLVESIVCMI), 926–946 (LNHWAISLLIFQLYDPCLEVC), and 984–1004 (LLLRFLATTVGFHYLSEINFI). Residue T1203 is modified to Phosphothreonine.

This sequence belongs to the RICTOR family. As to quaternary structure, the target of rapamycin complex 2 (TORC2) is composed of at least bit61, pop3/wat1, sin1, ste20 and tor1. In terms of processing, either Ser-203 or Ser-204 are phosphorylated as well.

The protein localises to the membrane. Functionally, component of TORC2, which regulates multiple cellular processes to control cell growth in response to environmental signals. TORC2 is required for cell survival under various stress conditions. TORC2 positively controls G1 cell-cycle arrest, sexual development and amino acid uptake. Positively regulates amino acid uptake through the control of expression of amino acid permeases. This chain is Target of rapamycin complex 2 subunit ste20, found in Schizosaccharomyces pombe (strain 972 / ATCC 24843) (Fission yeast).